A 214-amino-acid chain; its full sequence is A-type ATP synthase subunit D (214 aa).

It belongs to the V-ATPase D subunit family. In terms of assembly, has multiple subunits with at least A(3), B(3), C, D, E, F, H, I and proteolipid K(x).

It localises to the cell membrane. Functionally, component of the A-type ATP synthase that produces ATP from ADP in the presence of a proton gradient across the membrane. This is A-type ATP synthase subunit D from Desulfurococcus sp. (strain SY).